Reading from the N-terminus, the 228-residue chain is Carbonic anhydrase (228 aa).

Cys-56, Asp-58, His-112, and Cys-115 together coordinate Zn(2+).

Belongs to the beta-class carbonic anhydrase family. It depends on Zn(2+) as a cofactor.

The enzyme catalyses hydrogencarbonate + H(+) = CO2 + H2O. In terms of biological role, catalyzes the reversible hydration of CO(2) to H(2)CO(3). The main role may be to provide inorganic carbon for the bicarbonate-dependent carboxylation reactions catalyzed by pyruvate carboxylase, acetyl-CoA carboxylase and carbamoyl-phosphate synthetase. Involved in osmoadaptation. This is Carbonic anhydrase from Emericella nidulans (strain FGSC A4 / ATCC 38163 / CBS 112.46 / NRRL 194 / M139) (Aspergillus nidulans).